The chain runs to 207 residues: M-zodatoxin-Lt4a (207 aa).

The first 22 residues, 1-22, serve as a signal peptide directing secretion; sequence MKFSIIALALAVAFVCVAESRS. The propeptide occupies 23–43; that stretch reads EEEGYDVSEEIQAEELEEAER. The short motif at 40–43 is the Processing quadruplet motif 1 element; the sequence is EAER. Glutamine amide is present on Gln-61. The Inverted processing quadruplet motif 1 motif lies at 63-66; that stretch reads REDS. A propeptide spanning residues 63–71 is cleaved from the precursor; the sequence is REDSEEAGR. The Processing quadruplet motif 2 signature appears at 68–71; that stretch reads EAGR. Gln-89 carries the post-translational modification Glutamine amide. The Inverted processing quadruplet motif 2 motif lies at 91-94; the sequence is REDS. Residues 91–99 constitute a propeptide that is removed on maturation; it reads REDSEEAGR. Positions 96-99 match the Processing quadruplet motif 3 motif; that stretch reads EAGR. Position 117 is a glutamine amide (Gln-117). The Inverted processing quadruplet motif 3 motif lies at 119 to 122; that stretch reads REDS. Residues 119–127 constitute a propeptide that is removed on maturation; it reads REDSEEAGR. The Processing quadruplet motif 4 signature appears at 124-127; that stretch reads EAGR. Glutamine amide is present on Gln-145. Positions 147–150 match the Inverted processing quadruplet motif 4 motif; sequence REDS. The propeptide occupies 147 to 155; sequence REDSEEAGR. Positions 152–155 match the Processing quadruplet motif 5 motif; that stretch reads EAGR. Gln-173 is subject to Glutamine amide. An Inverted processing quadruplet motif 5 motif is present at residues 175 to 178; the sequence is REDT. A propeptide spanning residues 175–182 is cleaved from the precursor; it reads REDTEEAR. The Processing quadruplet motif 6 signature appears at 179 to 182; that stretch reads EEAR. The residue at position 206 (Phe-206) is a Phenylalanine amide.

It belongs to the cationic peptide 03 (latarcin) family. 04 subfamily. Cleavage of the propeptide depends on the processing quadruplet motif (PQM) (XXXR, with at least one of X being E) and the inverted PQM (RXXX, with at least one of X being E). Expressed by the venom gland.

It localises to the secreted. Functionally, M-zodatoxin-Lt4a: Has antimicrobial activity against Gram-positive bacteria (A.globiformis VKM Ac-1112 (MIC=0.3 uM), and B.subtilis VKM B-501 (MIC=1.1 uM)), Gram-negative bacteria (E.coli DH5-alpha (MIC=4.5 uM), E.coli MH1 (MIC=3.2 uM), and P.aeruginosa PAO1 (MIC&gt;35 uM)), and yeasts (P.pastoris GS115 (MIC=36 uM), and S.cerevisiae Y190 (MIC=18 uM)). Does not have hemolytic activity against rabbit erythrocytes. Causes paralysis, but is not lethal when injected into insect (M.domestica) larvae. In terms of biological role, shows no antimicrobial activity against Gram-positive bacterium B.subtilis B-501 or Gram-negative bacterium E.coli DH5-alpha at concentrations up to 20 uM. Its function is as follows. Shows no antimicrobial activity against Gram-positive bacterium B.subtilis B-501 or Gram-negative bacterium E.coli DH5-alpha at concentrations up to 20 uM. Shows no toxicity towards insect (S.carnaria) larvae. The chain is M-zodatoxin-Lt4a from Lachesana tarabaevi (Spider).